A 113-amino-acid polypeptide reads, in one-letter code: U11-theraphotoxin-Hhn1l (113 aa).

Positions 1 to 21 are cleaved as a signal peptide; that stretch reads MNTGRVTFLVVFLVAVSLGPA. Residues 22–74 constitute a propeptide that is removed on maturation; the sequence is DKEENPMEMQEKTQQGKNYLNFGENLVVPKLEELKAKLVEKESKKSKNSRQKR. Cystine bridges form between Cys-82/Cys-95 and Cys-89/Cys-110.

It belongs to the neurotoxin 14 (magi-1) family. 01 (HNTX-16) subfamily. Expressed by the venom gland.

It localises to the secreted. Its function is as follows. Probable ion channel inhibitor. The chain is U11-theraphotoxin-Hhn1l from Cyriopagopus hainanus (Chinese bird spider).